We begin with the raw amino-acid sequence, 357 residues long: Decapping nuclease RAI1 (357 aa).

Glu-157 lines the a divalent metal cation pocket. Cys-189 and Glu-206 together coordinate substrate. Residues Asp-208, Glu-226, and Leu-227 each contribute to the a divalent metal cation site. 2 residues coordinate substrate: Lys-228 and Gln-252.

The protein belongs to the DXO/Dom3Z family. In terms of assembly, interacts with rat1; the interaction is direct, stabilizes rat1 protein structure and stimulates its exoribonuclease activity. The interaction also stimulates rai1 pyrophosphohydrolase activity, probably by recruiting it to mRNA substrates. It depends on a divalent metal cation as a cofactor.

Its subcellular location is the nucleus. The catalysed reaction is a 5'-end NAD(+)-phospho-ribonucleoside in mRNA + H2O = a 5'-end phospho-ribonucleoside in mRNA + NAD(+) + H(+). It catalyses the reaction a 5'-end (N(7)-methyl 5'-triphosphoguanosine)-ribonucleoside-ribonucleotide in mRNA + H2O = a (N(7)-methyl 5'-triphosphoguanosine)-nucleoside + a 5'-end phospho-ribonucleoside in mRNA + H(+). It carries out the reaction a 5'-end triphospho-ribonucleoside in mRNA + H2O = a 5'-end phospho-ribonucleoside in mRNA + diphosphate + H(+). Functionally, decapping enzyme for NAD-capped RNAs: specifically hydrolyzes the nicotinamide adenine dinucleotide (NAD) cap from a subset of RNAs by removing the entire NAD moiety from the 5'-end of an NAD-capped RNA. The NAD-cap is present at the 5'-end of some RNAs and snoRNAs. In contrast to the canonical 5'-end N7 methylguanosine (m7G) cap, the NAD cap promotes mRNA decay. Also acts as a non-canonical decapping enzyme that removes the entire cap structure of m7G capped or incompletely capped RNAs. Has decapping activity toward incomplete 5'-end m7G cap mRNAs such as unmethylated 5'-end-capped RNA (cap0), while it has no activity toward 2'-O-ribose methylated m7G cap (cap1). Also possesses RNA 5'-pyrophosphohydrolase activity by hydrolyzing the 5'-end triphosphate to release pyrophosphates. Stimulates exoribonuclease activity of Rat1, allowing it to degrade RNAs with stable secondary structure more effectively. In Emericella nidulans (strain FGSC A4 / ATCC 38163 / CBS 112.46 / NRRL 194 / M139) (Aspergillus nidulans), this protein is Decapping nuclease RAI1 (rai1).